Reading from the N-terminus, the 364-residue chain is UDP-N-acetylglucosamine--N-acetylmuramyl-(pentapeptide) pyrophosphoryl-undecaprenol N-acetylglucosamine transferase (364 aa).

Residues 12–14, Asn-124, Arg-167, Ser-195, Ile-249, 268–273, and Gln-294 contribute to the UDP-N-acetyl-alpha-D-glucosamine site; these read TGG and ALTVSE.

It belongs to the glycosyltransferase 28 family. MurG subfamily.

The protein resides in the cell inner membrane. The catalysed reaction is di-trans,octa-cis-undecaprenyl diphospho-N-acetyl-alpha-D-muramoyl-L-alanyl-D-glutamyl-meso-2,6-diaminopimeloyl-D-alanyl-D-alanine + UDP-N-acetyl-alpha-D-glucosamine = di-trans,octa-cis-undecaprenyl diphospho-[N-acetyl-alpha-D-glucosaminyl-(1-&gt;4)]-N-acetyl-alpha-D-muramoyl-L-alanyl-D-glutamyl-meso-2,6-diaminopimeloyl-D-alanyl-D-alanine + UDP + H(+). The protein operates within cell wall biogenesis; peptidoglycan biosynthesis. Functionally, cell wall formation. Catalyzes the transfer of a GlcNAc subunit on undecaprenyl-pyrophosphoryl-MurNAc-pentapeptide (lipid intermediate I) to form undecaprenyl-pyrophosphoryl-MurNAc-(pentapeptide)GlcNAc (lipid intermediate II). The chain is UDP-N-acetylglucosamine--N-acetylmuramyl-(pentapeptide) pyrophosphoryl-undecaprenol N-acetylglucosamine transferase from Alteromonas mediterranea (strain DSM 17117 / CIP 110805 / LMG 28347 / Deep ecotype).